Reading from the N-terminus, the 1194-residue chain is MAIRTGFCNPFLTQASGIKYNPRTGRGSNREFLHSYKTTMSSFQFLAPKCLDEDVPMEERKGVHVGTLSRPPKVYCNGKEVPILDFRCSSPWPRRVNIWGEIDFRGDKFDPRFNTFHVYDIVETTEAASNGDVSRFATATRPLGTVITLLGMSRCGKRVAVHVYGICQYFYINKAEVDTACGIRSGSELSVLLAECLRSSMITQNDATLNGDKNAFHGTSFKSASPESFRVEVIERTDVYYYDTQPCAFYRVYSPSSKFTNYLCDNFHPELKKYEGRVDATTRFLMDNPGFVSFGWYQLKPGVDGERVRVRPASRQLTLSDVEIDCMSDNLQAIPNDDSWPDYKLLCFDIECKSGGSNELAFPDATHLEDLVIQISCLLYSIPRQSLEHILLFSLGSCDLPQRYVQEMKDAGLPEPTVLEFDSEFELLIAFMTLVKQYAPEFATGYNIVNFDWAFIMEKLNSIYSLKLDGYGSINRGGLFKIWDVGKSGFQRRSKVKINGLISLDMYAIATEKLKLSSYKLDSVAREALNESKRDLPYKDIPGYYASGPNTRGIIGEYCIQDSALVGKLFFKYLPHLELSAVARLARITLTKAIYDGQQVRIYTCLLGLASSRGFILPDGGYPATFEYKDVIPDVGDVEEEMDEDESVSPTGTSSGRNVGYKGARVFDPDTGFYIDPVVVLDFASLYPSIIQAHNLCFTTLTLNFETVKRLNPSDYATFTVGGKRLFFVRSNVRESLLGVLLKDWLAMRKAIRARIPGSSSDEAVLLDKQQAAIKVVCNSVYGFTGVAQGFLPCLYVAATVTTIGRQMLLSTRDYIHNNWAAFERFITAFPDIESSVLSQKAYEVKVIYGDTDSVFIRFKGVSVEGIAKIGEKMAHIISTALFCPPIKLECEKTFIKLLLITKKKYIGVIYGGKVLMKGVDLVRKNNCQFINDYARKLVELLLYDDTVSRAAAEASCVSIAEWNRRAMPSGMAGFGRIIADAHRQITSPKLDINKFVMTAELSRPPSAYINRRLAHLTVYYKLVMRQGQIPNVRERIPYVIVAPTDEVEADAKSVALLRGDPLQNTAGKRCGEAKRKLIISDLAEDPIHVTSHGLSLNIDYYFSHLIGTASVTFKALFGNDTKLTERLLKRFIPETRVVNVKMLNRLQAAGFVCIHAPCWDNKMNTEAEITEEEQSHQIMRRVFCIPKAILHQS.

This sequence belongs to the DNA polymerase type-B family. As to quaternary structure, forms a complex with the ssDNA-binding protein, the DNA polymerase processivity factor, and the alkaline exonuclease. Interacts with the helicase-primase complex composed of the primase, the helicase and the primase-associated factor; this interaction may coordinate leading and lagging strand DNA synthesis at the replication fork.

It is found in the host nucleus. It catalyses the reaction DNA(n) + a 2'-deoxyribonucleoside 5'-triphosphate = DNA(n+1) + diphosphate. The enzyme catalyses Endonucleolytic cleavage to 5'-phosphomonoester.. Its function is as follows. Replicates viral genomic DNA. The replication complex is composed of six viral proteins: the DNA polymerase, processivity factor, primase, primase-associated factor, helicase, and ssDNA-binding protein. Additionally, the polymerase contains an intrinsic ribonuclease H (RNase H) activity that specifically degrades RNA/DNA heteroduplexes or duplex DNA substrates in the 5' to 3' direction. Therefore, it can catalyze the excision of the RNA primers that initiate the synthesis of Okazaki fragments at a replication fork during viral DNA replication. The sequence is that of DNA polymerase catalytic subunit from Varicella-zoster virus (strain Dumas) (HHV-3).